A 150-amino-acid chain; its full sequence is Putative pre-16S rRNA nuclease (150 aa).

This sequence belongs to the YqgF nuclease family.

The protein localises to the cytoplasm. Its function is as follows. Could be a nuclease involved in processing of the 5'-end of pre-16S rRNA. The sequence is that of Putative pre-16S rRNA nuclease from Chlamydia abortus (strain DSM 27085 / S26/3) (Chlamydophila abortus).